A 374-amino-acid polypeptide reads, in one-letter code: Ribosomal RNA large subunit methyltransferase G (374 aa).

This sequence belongs to the methyltransferase superfamily. RlmG family.

The protein resides in the cytoplasm. It carries out the reaction guanosine(1835) in 23S rRNA + S-adenosyl-L-methionine = N(2)-methylguanosine(1835) in 23S rRNA + S-adenosyl-L-homocysteine + H(+). In terms of biological role, specifically methylates the guanine in position 1835 (m2G1835) of 23S rRNA. In Pseudomonas putida (strain ATCC 700007 / DSM 6899 / JCM 31910 / BCRC 17059 / LMG 24140 / F1), this protein is Ribosomal RNA large subunit methyltransferase G.